Reading from the N-terminus, the 181-residue chain is Sporozoite-associated mosquito saliva protein 1 (181 aa).

The first 24 residues, Met-1–Ala-24, serve as a signal peptide directing secretion.

As to expression, salivary gland (at protein level). In terms of tissue distribution, (Microbial infection) Detected with Plasmodium berghei sporozoites isolated from the saliva of infected Anopheles gambiae mosquitoes (at protein level).

It localises to the secreted. In terms of biological role, decreases host neutrophil chemotaxis induced by N-formylmethionine-leucyl-phenylalanine (fMLP). (Microbial infection) Interacts with the surface of Plasmodium berghei sporozoites. Enhances sporozoite gliding activity. Enhances host hepatocyte traversal by sporozoites. The protein is Sporozoite-associated mosquito saliva protein 1 of Anopheles gambiae (African malaria mosquito).